Here is a 235-residue protein sequence, read N- to C-terminus: Small ribosomal subunit protein uS3 (235 aa).

The 69-residue stretch at 39 to 107 folds into the KH type-2 domain; it reads VRQFLNKELA…PAQINIAEVK (69 aa). Residues 216 to 235 are disordered; the sequence is QPEQQPTDKPKKVPRGKGRK.

It belongs to the universal ribosomal protein uS3 family. As to quaternary structure, part of the 30S ribosomal subunit. Forms a tight complex with proteins S10 and S14.

In terms of biological role, binds the lower part of the 30S subunit head. Binds mRNA in the 70S ribosome, positioning it for translation. The polypeptide is Small ribosomal subunit protein uS3 (Aggregatibacter actinomycetemcomitans (Actinobacillus actinomycetemcomitans)).